The chain runs to 564 residues: Alpha-amylase 3 (564 aa).

A signal peptide spans 1 to 21 (MFGVYFVLLFLSSALIHVANA). Cys51 and Cys59 form a disulfide bridge. Residues Asn56 and Trp105 each coordinate substrate. Asn143 serves as a coordination point for Ca(2+). A disulfide bridge connects residues Cys172 and Cys188. Asn181 carries N-linked (GlcNAc...) asparagine glycosylation. Asp198 is a binding site for Ca(2+). Residue Arg227 coordinates substrate. Residue Asp229 participates in Ca(2+) binding. Asp229 (nucleophile) is an active-site residue. 232 to 233 (KM) contacts substrate. Asn235 carries N-linked (GlcNAc...) asparagine glycosylation. Residue Glu253 participates in Ca(2+) binding. The active-site Proton donor is the Glu253. A disulfide bridge connects residues Cys263 and Cys306. Asn282 and Asn305 each carry an N-linked (GlcNAc...) asparagine glycan. Positions 322 and 369 each coordinate substrate. Residues Asn438, Asn447, and Asn498 are each glycosylated (N-linked (GlcNAc...) asparagine). Residue Ser538 is the site of GPI-anchor amidated serine attachment. A propeptide spans 539-564 (SSRLILSFKTLVFGLGVTAMLFVLFF) (removed in mature form).

Belongs to the glycosyl hydrolase 13 family. It depends on Ca(2+) as a cofactor. Post-translationally, N-glycosylated.

The protein resides in the cell membrane. The catalysed reaction is Endohydrolysis of (1-&gt;4)-alpha-D-glucosidic linkages in polysaccharides containing three or more (1-&gt;4)-alpha-linked D-glucose units.. Functionally, has a role in cell wall biosynthesis where it is involved in maintaining cell wall strength and shape. This Schizosaccharomyces pombe (strain 972 / ATCC 24843) (Fission yeast) protein is Alpha-amylase 3 (aah3).